Consider the following 310-residue polypeptide: MQIQDRFMSPQWKARFKGYVQVTKPGIIFGNLISVAGGFLLAAKGDVNLVLMLASLVGLSLVVASGCAINNCIDRDIDAKMQRTCKRVTVTGEIAVGNVLAFGLALGVLGFSILALFTNALALLFAVIGYIVYVGVYSLYMKRNSVYGTLVGSFSGAVPPVVGYCSVTGQMDMGAAILLLMFSLWQMPHSYAIAIFRFNDYAAANIPVLPVAEGMTKAKLHIVLYIAVFALVSALLPLAGYTGIAFMAVTCATSLWWLAMALKGYRHGVDMQRWARQVFGFSIITITALSVTMALDFQVVSQAPLLTLVK.

The next 9 helical transmembrane spans lie at 25–45 (PGIIFGNLISVAGGFLLAAKG), 49–69 (LVLMLASLVGLSLVVASGCAI), 87–107 (RVTVTGEIAVGNVLAFGLALG), 120–139 (ALALLFAVIGYIVYVGVYSL), 145–165 (SVYGTLVGSFSGAVPPVVGYC), 176–196 (AILLLMFSLWQMPHSYAIAIF), 220–240 (LHIVLYIAVFALVSALLPLAG), 242–262 (TGIAFMAVTCATSLWWLAMAL), and 277–297 (QVFGFSIITITALSVTMALDF).

It belongs to the UbiA prenyltransferase family. Protoheme IX farnesyltransferase subfamily.

It localises to the cell inner membrane. The catalysed reaction is heme b + (2E,6E)-farnesyl diphosphate + H2O = Fe(II)-heme o + diphosphate. It participates in porphyrin-containing compound metabolism; heme O biosynthesis; heme O from protoheme: step 1/1. Converts heme B (protoheme IX) to heme O by substitution of the vinyl group on carbon 2 of heme B porphyrin ring with a hydroxyethyl farnesyl side group. The chain is Protoheme IX farnesyltransferase 2 from Shewanella baltica (strain OS185).